Here is a 391-residue protein sequence, read N- to C-terminus: 1-deoxy-D-xylulose 5-phosphate reductoisomerase (391 aa).

The NADPH site is built by Thr17, Gly18, Ser19, Ile20, Asn47, and Asn130. Lys131 provides a ligand contact to 1-deoxy-D-xylulose 5-phosphate. Glu132 serves as a coordination point for NADPH. Mn(2+) is bound at residue Asp156. The 1-deoxy-D-xylulose 5-phosphate site is built by Ser157, Glu158, Ser182, and His205. Residue Glu158 participates in Mn(2+) binding. Gly211 contributes to the NADPH binding site. Residues Ser218, Asn223, Lys224, and Glu227 each contribute to the 1-deoxy-D-xylulose 5-phosphate site. Glu227 contributes to the Mn(2+) binding site.

The protein belongs to the DXR family. Mg(2+) is required as a cofactor. Requires Mn(2+) as cofactor.

The enzyme catalyses 2-C-methyl-D-erythritol 4-phosphate + NADP(+) = 1-deoxy-D-xylulose 5-phosphate + NADPH + H(+). It participates in isoprenoid biosynthesis; isopentenyl diphosphate biosynthesis via DXP pathway; isopentenyl diphosphate from 1-deoxy-D-xylulose 5-phosphate: step 1/6. In terms of biological role, catalyzes the NADPH-dependent rearrangement and reduction of 1-deoxy-D-xylulose-5-phosphate (DXP) to 2-C-methyl-D-erythritol 4-phosphate (MEP). The polypeptide is 1-deoxy-D-xylulose 5-phosphate reductoisomerase (Sinorhizobium medicae (strain WSM419) (Ensifer medicae)).